Reading from the N-terminus, the 1554-residue chain is Protein TALPID3 (1554 aa).

A compositionally biased stretch (basic and acidic residues) spans 57-68 (EHVHSADERRTE). Disordered regions lie at residues 57–84 (EHVH…AGPE), 227–247 (AAEG…SAGR), 312–396 (SIRL…SPER), 411–466 (TADN…TTVQ), and 489–523 (ADAF…APIS). Residues 204–270 (LMKAQSEMEA…QRLQHLETIQ (67 aa)) adopt a coiled-coil conformation. Composition is skewed to polar residues over residues 312 to 321 (SIRLSATDNP), 360 to 391 (HWTS…PNNR), 412 to 447 (ADNS…NGQN), and 454 to 466 (EPTN…TTVQ). Residues 513–523 (TAPPPATAPIS) show a composition bias toward pro residues. A required for centrosomal localization region spans residues 553–639 (SMFEDAGLVL…SSERIVDAAV (87 aa)). A coiled-coil region spans residues 556-586 (EDAGLVLRQVRQSKKTLEENLEAILRAKDGE). Basic and acidic residues predominate over residues 639–650 (VSRREAGQRTRA). Disordered regions lie at residues 639–687 (VSRR…AVKQ), 1079–1178 (GTPA…EPGS), 1214–1265 (QEES…SVTV), 1354–1374 (QSQQ…SEGQ), and 1500–1554 (KGED…NDVF). The span at 1080–1089 (TPATLVQTQD) shows a compositional bias: polar residues. Pro residues-rich tracts occupy residues 1099–1115 (TPAP…PSPV) and 1230–1239 (QSPPAPPLPP). A compositionally biased stretch (low complexity) spans 1240–1265 (VIQKSESSSSSSSSSSESSCSSSVTV). The span at 1535–1554 (ESVSLSSVEGDTDSSANDVF) shows a compositional bias: polar residues.

The protein belongs to the TALPID3 family.

It is found in the cytoplasm. It localises to the cytoskeleton. Its subcellular location is the cilium basal body. The protein localises to the microtubule organizing center. The protein resides in the centrosome. It is found in the centriole. Its function is as follows. Required for ciliogenesis and sonic hedgehog/SHH signaling. This chain is Protein TALPID3 (talpid3), found in Danio rerio (Zebrafish).